A 269-amino-acid polypeptide reads, in one-letter code: MKQPIIVVENLYSSYDGKNYVLRNVSFTVNEGELFGILGPNGAGKSTLVLHLNGILKAKRGRVLVSGIDVRKNPREVRKLVGIVFQDPNDQLFCPTVREEVGFGPYNLGVRGKDLEDVVFNSLKLVGMEGYIDREIKSLSFGEKKRVAIAAILAMNPQIVIFDEPFANLDFKGKKLVWDVIKTLRKEGKTVIIVTHEAEYLLECDRILLLANGEVIRVGEPGEVLIPEILKRNNLDVPLIIELFFELGLELPKSLDDAKRVLKSKLKLG.

The ABC transporter domain maps to 6 to 237 (IVVENLYSSY…EILKRNNLDV (232 aa)). 39-46 (GPNGAGKS) contacts ATP.

Belongs to the ABC transporter superfamily.

The protein localises to the cell membrane. Its function is as follows. Probably part of an ABC transporter complex. Responsible for energy coupling to the transport system. This Pyrococcus furiosus (strain ATCC 43587 / DSM 3638 / JCM 8422 / Vc1) protein is Putative ABC transporter ATP-binding protein PF0528.